A 1043-amino-acid polypeptide reads, in one-letter code: Isoleucine--tRNA ligase (1043 aa).

The short motif at 48-58 (PFATGLPHYGH) is the 'HIGH' region element. The 'KMSKS' region motif lies at 591–595 (KMSKR). Position 594 (K594) interacts with ATP.

It belongs to the class-I aminoacyl-tRNA synthetase family. IleS type 2 subfamily. As to quaternary structure, monomer. Requires Zn(2+) as cofactor.

Its subcellular location is the cytoplasm. It carries out the reaction tRNA(Ile) + L-isoleucine + ATP = L-isoleucyl-tRNA(Ile) + AMP + diphosphate. Catalyzes the attachment of isoleucine to tRNA(Ile). As IleRS can inadvertently accommodate and process structurally similar amino acids such as valine, to avoid such errors it has two additional distinct tRNA(Ile)-dependent editing activities. One activity is designated as 'pretransfer' editing and involves the hydrolysis of activated Val-AMP. The other activity is designated 'posttransfer' editing and involves deacylation of mischarged Val-tRNA(Ile). The chain is Isoleucine--tRNA ligase from Chlamydia pneumoniae (Chlamydophila pneumoniae).